The primary structure comprises 52 residues: Light-harvesting protein B-870 alpha chain (52 aa).

At 1–15 the chain is on the cytoplasmic side; the sequence is MAKFYKIWLIFDPRR. The helical transmembrane segment at 16-36 threads the bilayer; it reads VFVAQGVFLFLLAAMIHLVVL. A bacteriochlorophyll is bound at residue His-32. The Periplasmic portion of the chain corresponds to 37–52; sequence SSGLNWFEAAAAVGGQ.

The protein belongs to the antenna complex alpha subunit family. As to quaternary structure, the core complex is formed by different alpha and beta chains, binding bacteriochlorophyll molecules, and arranged most probably in tetrameric structures disposed around the reaction center. The non-pigmented gamma chains may constitute additional components.

The protein localises to the cell inner membrane. Functionally, antenna complexes are light-harvesting systems, which transfer the excitation energy to the reaction centers. This chain is Light-harvesting protein B-870 alpha chain (pufA), found in Roseobacter denitrificans (strain ATCC 33942 / OCh 114) (Erythrobacter sp. (strain OCh 114)).